The chain runs to 283 residues: Putative cuticle collagen 79 (283 aa).

Positions 59-283 (FKQQSSPPSP…ARSISKVAIQ (225 aa)) are disordered. Triple-helical region regions lie at residues 94 to 122 (GPPG…ENGG), 139 to 201 (GPRG…PGRK), and 204 to 269 (GEAG…DGAY). The span at 137-146 (PPGPRGPPGP) shows a compositional bias: pro residues. Over residues 226-240 (TDGDDGVDGQPGDEG) the composition is skewed to acidic residues. Over residues 253–265 (PQGEQGTEGQPGT) the composition is skewed to low complexity.

This sequence belongs to the cuticular collagen family. Collagen polypeptide chains are complexed within the cuticle by disulfide bonds and other types of covalent cross-links.

Its function is as follows. Nematode cuticles are composed largely of collagen-like proteins. The cuticle functions both as an exoskeleton and as a barrier to protect the worm from its environment. The polypeptide is Putative cuticle collagen 79 (col-79) (Caenorhabditis elegans).